A 387-amino-acid polypeptide reads, in one-letter code: 3-ketoacyl-CoA thiolase (387 aa).

Cys-91 (acyl-thioester intermediate) is an active-site residue. Catalysis depends on proton acceptor residues His-343 and Cys-373.

The protein belongs to the thiolase-like superfamily. Thiolase family. In terms of assembly, heterotetramer of two alpha chains (FadB) and two beta chains (FadA).

It localises to the cytoplasm. The enzyme catalyses an acyl-CoA + acetyl-CoA = a 3-oxoacyl-CoA + CoA. The protein operates within lipid metabolism; fatty acid beta-oxidation. Catalyzes the final step of fatty acid oxidation in which acetyl-CoA is released and the CoA ester of a fatty acid two carbons shorter is formed. The sequence is that of 3-ketoacyl-CoA thiolase from Vibrio cholerae serotype O1 (strain ATCC 39541 / Classical Ogawa 395 / O395).